A 392-amino-acid chain; its full sequence is S-adenosylmethionine synthase (392 aa).

E10 lines the Mg(2+) pocket. Residue H16 coordinates ATP. Residue E44 participates in K(+) binding. L-methionine-binding residues include E57 and Q100. Residues 168–170 (DGK), 236–239 (SGRF), D247, 253–254 (RK), A270, K274, and K278 each bind ATP. D247 serves as a coordination point for L-methionine. K278 provides a ligand contact to L-methionine.

Belongs to the AdoMet synthase family. Homotetramer. Mn(2+) is required as a cofactor. It depends on Mg(2+) as a cofactor. Co(2+) serves as cofactor. The cofactor is K(+).

It is found in the cytoplasm. The enzyme catalyses L-methionine + ATP + H2O = S-adenosyl-L-methionine + phosphate + diphosphate. Its pathway is amino-acid biosynthesis; S-adenosyl-L-methionine biosynthesis; S-adenosyl-L-methionine from L-methionine: step 1/1. In terms of biological role, catalyzes the formation of S-adenosylmethionine from methionine and ATP. The reaction comprises two steps that are both catalyzed by the same enzyme: formation of S-adenosylmethionine (AdoMet) and triphosphate, and subsequent hydrolysis of the triphosphate. The chain is S-adenosylmethionine synthase (SAMS) from Phaseolus lunatus (Lima bean).